The primary structure comprises 209 residues: Small ribosomal subunit protein uS3 (209 aa).

The KH type-2 domain occupies 38–107; the sequence is IRKFIKNRYY…RVVINIEEIK (70 aa).

Belongs to the universal ribosomal protein uS3 family. As to quaternary structure, part of the 30S ribosomal subunit. Forms a tight complex with proteins S10 and S14.

Functionally, binds the lower part of the 30S subunit head. Binds mRNA in the 70S ribosome, positioning it for translation. This chain is Small ribosomal subunit protein uS3, found in Thermotoga petrophila (strain ATCC BAA-488 / DSM 13995 / JCM 10881 / RKU-1).